Reading from the N-terminus, the 270-residue chain is Diaminopimelate epimerase (270 aa).

Substrate contacts are provided by Asn-15, Gln-49, and Asn-66. Residue Cys-75 is the Proton donor of the active site. Substrate is bound by residues 76–77 (GN), Asn-155, Asn-187, and 204–205 (ER). The active-site Proton acceptor is Cys-213. 214–215 (GS) serves as a coordination point for substrate.

The protein belongs to the diaminopimelate epimerase family. Homodimer.

It localises to the cytoplasm. It catalyses the reaction (2S,6S)-2,6-diaminopimelate = meso-2,6-diaminopimelate. It functions in the pathway amino-acid biosynthesis; L-lysine biosynthesis via DAP pathway; DL-2,6-diaminopimelate from LL-2,6-diaminopimelate: step 1/1. In terms of biological role, catalyzes the stereoinversion of LL-2,6-diaminopimelate (L,L-DAP) to meso-diaminopimelate (meso-DAP), a precursor of L-lysine and an essential component of the bacterial peptidoglycan. This chain is Diaminopimelate epimerase, found in Rickettsia typhi (strain ATCC VR-144 / Wilmington).